We begin with the raw amino-acid sequence, 573 residues long: Isocitrate dehydrogenase kinase/phosphatase (573 aa).

ATP contacts are provided by residues 318 to 324 (APGVRGM) and Lys-339. Asp-374 is an active-site residue.

This sequence belongs to the AceK family.

It localises to the cytoplasm. The catalysed reaction is L-seryl-[isocitrate dehydrogenase] + ATP = O-phospho-L-seryl-[isocitrate dehydrogenase] + ADP + H(+). Its function is as follows. Bifunctional enzyme which can phosphorylate or dephosphorylate isocitrate dehydrogenase (IDH) on a specific serine residue. This is a regulatory mechanism which enables bacteria to bypass the Krebs cycle via the glyoxylate shunt in response to the source of carbon. When bacteria are grown on glucose, IDH is fully active and unphosphorylated, but when grown on acetate or ethanol, the activity of IDH declines drastically concomitant with its phosphorylation. The sequence is that of Isocitrate dehydrogenase kinase/phosphatase from Stutzerimonas stutzeri (strain A1501) (Pseudomonas stutzeri).